We begin with the raw amino-acid sequence, 523 residues long: Peptide chain release factor 3 (523 aa).

In terms of domain architecture, tr-type G spans 10–277 (NKRRTFAIIS…QFVDLAPAPG (268 aa)). GTP is bound by residues 19–26 (SHPDAGKT), 87–91 (DTPGH), and 141–144 (NKLD).

The protein belongs to the TRAFAC class translation factor GTPase superfamily. Classic translation factor GTPase family. PrfC subfamily.

The protein resides in the cytoplasm. In terms of biological role, increases the formation of ribosomal termination complexes and stimulates activities of RF-1 and RF-2. It binds guanine nucleotides and has strong preference for UGA stop codons. It may interact directly with the ribosome. The stimulation of RF-1 and RF-2 is significantly reduced by GTP and GDP, but not by GMP. In Lactobacillus delbrueckii subsp. bulgaricus (strain ATCC BAA-365 / Lb-18), this protein is Peptide chain release factor 3.